A 59-amino-acid chain; its full sequence is DNA-directed RNA polymerase subunit Rpo6 (59 aa).

Belongs to the archaeal Rpo6/eukaryotic RPB6 RNA polymerase subunit family. Part of the RNA polymerase complex.

The protein localises to the cytoplasm. It carries out the reaction RNA(n) + a ribonucleoside 5'-triphosphate = RNA(n+1) + diphosphate. In terms of biological role, DNA-dependent RNA polymerase (RNAP) catalyzes the transcription of DNA into RNA using the four ribonucleoside triphosphates as substrates. In Halorubrum lacusprofundi (strain ATCC 49239 / DSM 5036 / JCM 8891 / ACAM 34), this protein is DNA-directed RNA polymerase subunit Rpo6.